Here is a 173-residue protein sequence, read N- to C-terminus: MPTVITHAAVPLCIGLGLGSKVIPPRLLFAGIILAMLPDADVLSFKFGVAYGNVFGHRGFTHSLVFAFVVPLLCVFIGRRWFRAGLIRCWLFLTVSLLSHSLLDSVTTGGKGVGWLWPWSDERFFAPWQVIKVAPFALSRYTTPYGHQVIISELMWVWLPGMLLMGMLWWRRR.

Residues 1–12 (MPTVITHAAVPL) are Cytoplasmic-facing. A helical membrane pass occupies residues 13–35 (CIGLGLGSKVIPPRLLFAGIILA). At 36 to 54 (MLPDADVLSFKFGVAYGNV) the chain is on the periplasmic side. The chain crosses the membrane as a helical span at residues 55 to 77 (FGHRGFTHSLVFAFVVPLLCVFI). Topologically, residues 78–83 (GRRWFR) are cytoplasmic. Residues 84–103 (AGLIRCWLFLTVSLLSHSLL) form a helical membrane-spanning segment. Topologically, residues 104-147 (DSVTTGGKGVGWLWPWSDERFFAPWQVIKVAPFALSRYTTPYGH) are periplasmic. Residues 148–170 (QVIISELMWVWLPGMLLMGMLWW) form a helical membrane-spanning segment. Topologically, residues 171–173 (RRR) are cytoplasmic.

The protein resides in the cell inner membrane. This is Inner membrane protein YbcI (ybcI) from Escherichia coli (strain K12).